The following is a 361-amino-acid chain: Cytochrome c peroxidase, mitochondrial (361 aa).

The N-terminal 67 residues, 1–67 (MTTAVRLLPS…NWGKAAALAS (67 aa)), are a transit peptide targeting the mitochondrion. His119 serves as the catalytic Proton acceptor. A Phosphotyrosine modification is found at Tyr220. His242 lines the heme b pocket. Trp258 acts as the Tryptophan radical intermediate in catalysis.

This sequence belongs to the peroxidase family. Cytochrome c peroxidase subfamily. In terms of assembly, forms a one-to-one complex with cytochrome c. Heme b is required as a cofactor. CCP1 precursor is processed by the rhomboid protease PCP1, which cleaves the N-terminal hydrophobic transit peptide. The m-AAA protease (composed of YTA12/RCA1 and YTA10/AFG3) is required for CCP1 maturation: m-AAA protease promotes membrane dislocation of the CCP1 transmembrane segment within the transit peptide to ensure the correct positioning of CCP1 within the membrane bilayer, allowing intramembrane cleavage by PCP1.

It is found in the mitochondrion matrix. It localises to the mitochondrion intermembrane space. The catalysed reaction is 2 Fe(II)-[cytochrome c] + H2O2 + 2 H(+) = 2 Fe(III)-[cytochrome c] + 2 H2O. In terms of biological role, destroys radicals which are normally produced within the cells and which are toxic to biological systems. The polypeptide is Cytochrome c peroxidase, mitochondrial (CCP1) (Saccharomyces cerevisiae (strain ATCC 204508 / S288c) (Baker's yeast)).